A 123-amino-acid chain; its full sequence is Phosphoribosyl-AMP cyclohydrolase (123 aa).

Asp-81 is a Mg(2+) binding site. Cys-82 is a binding site for Zn(2+). The Mg(2+) site is built by Asp-83 and Asp-85. Zn(2+) is bound by residues Cys-98 and Cys-105.

It belongs to the PRA-CH family. As to quaternary structure, homodimer. Mg(2+) serves as cofactor. It depends on Zn(2+) as a cofactor.

The protein localises to the cytoplasm. It catalyses the reaction 1-(5-phospho-beta-D-ribosyl)-5'-AMP + H2O = 1-(5-phospho-beta-D-ribosyl)-5-[(5-phospho-beta-D-ribosylamino)methylideneamino]imidazole-4-carboxamide. It participates in amino-acid biosynthesis; L-histidine biosynthesis; L-histidine from 5-phospho-alpha-D-ribose 1-diphosphate: step 3/9. In terms of biological role, catalyzes the hydrolysis of the adenine ring of phosphoribosyl-AMP. This chain is Phosphoribosyl-AMP cyclohydrolase, found in Nocardioides sp. (strain ATCC BAA-499 / JS614).